Here is a 190-residue protein sequence, read N- to C-terminus: dCTP deaminase (190 aa).

Residue lysine 113–arginine 118 participates in dCTP binding. The Proton donor/acceptor role is filled by glutamate 139. DCTP is bound by residues glutamine 158, tyrosine 172, lysine 181, and glutamine 182.

This sequence belongs to the dCTP deaminase family. In terms of assembly, homotrimer.

It catalyses the reaction dCTP + H2O + H(+) = dUTP + NH4(+). It participates in pyrimidine metabolism; dUMP biosynthesis; dUMP from dCTP (dUTP route): step 1/2. Its function is as follows. Catalyzes the deamination of dCTP to dUTP. In Chlamydia felis (strain Fe/C-56) (Chlamydophila felis), this protein is dCTP deaminase.